Here is a 265-residue protein sequence, read N- to C-terminus: Capsule polysaccharide export inner-membrane protein BexB (265 aa).

Transmembrane regions (helical) follow at residues 37 to 57, 64 to 84, 118 to 138, 151 to 171, 178 to 198, and 235 to 255; these read IGFF…VMMW, KFST…AMMW, LLEV…LVMI, LIAW…ICAI, FGKI…AFFF, and ESIG…LVMV. The ABC transmembrane type-2 domain maps to 37–258; the sequence is IGFFWLFVEP…LLGLVMVKNF (222 aa).

Belongs to the ABC-2 integral membrane protein family.

Its subcellular location is the cell inner membrane. Functionally, may form an ATP-driven capsule polysaccharide export apparatus, in association with the BexA, BexC and BexD proteins. The protein is Capsule polysaccharide export inner-membrane protein BexB (bexB) of Haemophilus influenzae.